Reading from the N-terminus, the 144-residue chain is Large ribosomal subunit protein uL15 (144 aa).

Residues 1–53 are disordered; it reads MRLNTLSPAVGAKSAPKRVGRGIGSGLGKTAGRGHKGQKSRSGGGVRPGFEGG. 2 stretches are compositionally biased toward gly residues: residues 21 to 31 and 42 to 52; these read RGIGSGLGKTA and SGGGVRPGFEG.

Belongs to the universal ribosomal protein uL15 family. In terms of assembly, part of the 50S ribosomal subunit.

Binds to the 23S rRNA. The chain is Large ribosomal subunit protein uL15 from Shewanella amazonensis (strain ATCC BAA-1098 / SB2B).